The following is a 285-amino-acid chain: Methylamine utilization protein MauF (285 aa).

Helical transmembrane passes span 39–59 (FIMM…MHST), 60–80 (MSVE…GGLL), 119–139 (YAIG…LLFA), 145–165 (YAVI…FGFL), 188–208 (VIGL…VQTP), 212–232 (IVTG…VIAV), and 265–285 (VEVD…LVML).

The protein resides in the cell membrane. The protein operates within one-carbon metabolism; methylamine degradation. This is Methylamine utilization protein MauF (mauF) from Methylophilus methylotrophus (Bacterium W3A1).